A 250-amino-acid chain; its full sequence is Hydroxyacylglutathione hydrolase (250 aa).

7 residues coordinate Zn(2+): His-53, His-55, Asp-57, His-58, His-111, Asp-128, and His-166.

This sequence belongs to the metallo-beta-lactamase superfamily. Glyoxalase II family. In terms of assembly, monomer. The cofactor is Zn(2+).

It catalyses the reaction an S-(2-hydroxyacyl)glutathione + H2O = a 2-hydroxy carboxylate + glutathione + H(+). The protein operates within secondary metabolite metabolism; methylglyoxal degradation; (R)-lactate from methylglyoxal: step 2/2. Functionally, thiolesterase that catalyzes the hydrolysis of S-D-lactoyl-glutathione to form glutathione and D-lactic acid. This is Hydroxyacylglutathione hydrolase from Methylobacillus flagellatus (strain ATCC 51484 / DSM 6875 / VKM B-1610 / KT).